The sequence spans 643 residues: 3D-(3,5/4)-trihydroxycyclohexane-1,2-dione hydrolase (643 aa).

A thiamine diphosphate-binding site is contributed by E65. The tract at residues 441 to 521 is thiamine pyrophosphate binding; it reads SLPGDLQRMW…VNVLLFDNCG (81 aa). Positions 492 and 519 each coordinate Mg(2+).

The protein belongs to the TPP enzyme family. Mg(2+) is required as a cofactor. Requires thiamine diphosphate as cofactor.

The enzyme catalyses 3D-3,5/4-trihydroxycyclohexane-1,2-dione + H2O = 5-deoxy-D-glucuronate + H(+). Its pathway is polyol metabolism; myo-inositol degradation into acetyl-CoA; acetyl-CoA from myo-inositol: step 3/7. Involved in the cleavage of the C1-C2 bond of 3D-(3,5/4)-trihydroxycyclohexane-1,2-dione (THcHDO) to yield 5-deoxy-glucuronate (5DG). This is 3D-(3,5/4)-trihydroxycyclohexane-1,2-dione hydrolase from Clostridium botulinum (strain Eklund 17B / Type B).